The primary structure comprises 426 residues: Histidine--tRNA ligase (426 aa).

Belongs to the class-II aminoacyl-tRNA synthetase family. In terms of assembly, homodimer.

Its subcellular location is the cytoplasm. It catalyses the reaction tRNA(His) + L-histidine + ATP = L-histidyl-tRNA(His) + AMP + diphosphate + H(+). This Streptococcus pyogenes serotype M28 (strain MGAS6180) protein is Histidine--tRNA ligase.